The chain runs to 503 residues: MDFSIKGCDWSKGTANGFLTGKSDCIVLGVFEAQTLSGAALDIDEATKGLVSRVIKAGDIDGKLGKTLFLHEVSGIGASRVLLVGLGRQDAFSQKAYGDAAKAAWRALLGTKVVQVTFTLAQLPVPERASDWGVRAAILALRNETYKFTQMKSKPDAGAPALKRVVFSVDPADDKAAKVAAKQAVALANGMDLTRDLGNLPGNVCTPTYLANTAKKIAKDWGLKVDVLGLKQIQALKMGSFLSVAKGSVEPPQFIVLQYRGAAAKAAPVVLVGKGITFDSGGISLKPGEGMDEMKYDMCGAGSVLGTMRAVAEMGLKINVVAIVPTCENMPAGNANKPGDIVTSMKGLTIEVLNTDAEGRLILCDALTYAERFKPAAVIDVATLTGACIIALGHHNTGLFSKDDALAGELLDASREAGDPAWRLPLDDEYQDQLKSNFADLANIGGRPAGSVTAACFLSRFAENYPWAHLDIAGTAWKSGAAKGATGRPVPLLAQFLIDRAGA.

Mn(2+)-binding residues include Lys274 and Asp279. The active site involves Lys286. The Mn(2+) site is built by Asp297, Asp356, and Glu358. Arg360 is a catalytic residue.

It belongs to the peptidase M17 family. It depends on Mn(2+) as a cofactor.

Its subcellular location is the cytoplasm. It catalyses the reaction Release of an N-terminal amino acid, Xaa-|-Yaa-, in which Xaa is preferably Leu, but may be other amino acids including Pro although not Arg or Lys, and Yaa may be Pro. Amino acid amides and methyl esters are also readily hydrolyzed, but rates on arylamides are exceedingly low.. The enzyme catalyses Release of an N-terminal amino acid, preferentially leucine, but not glutamic or aspartic acids.. Functionally, presumably involved in the processing and regular turnover of intracellular proteins. Catalyzes the removal of unsubstituted N-terminal amino acids from various peptides. This chain is Probable cytosol aminopeptidase, found in Burkholderia pseudomallei (strain 1710b).